The primary structure comprises 155 residues: Small ribosomal subunit protein uS7 (155 aa).

Belongs to the universal ribosomal protein uS7 family. As to quaternary structure, part of the 30S ribosomal subunit. Contacts proteins S9 and S11.

Its function is as follows. One of the primary rRNA binding proteins, it binds directly to 16S rRNA where it nucleates assembly of the head domain of the 30S subunit. Is located at the subunit interface close to the decoding center, probably blocks exit of the E-site tRNA. The chain is Small ribosomal subunit protein uS7 from Mycoplasma genitalium (strain ATCC 33530 / DSM 19775 / NCTC 10195 / G37) (Mycoplasmoides genitalium).